The chain runs to 526 residues: GMP synthase [glutamine-hydrolyzing] (526 aa).

The Glutamine amidotransferase type-1 domain occupies 14–208; that stretch reads SILIVDFGSQ…VHDICGLAGD (195 aa). The Nucleophile role is filled by Cys91. Active-site residues include His182 and Glu184. One can recognise a GMPS ATP-PPase domain in the interval 209 to 401; it reads WTMAEFRQTK…LGMPDVFVDR (193 aa). 236–242 contributes to the ATP binding site; sequence SGGVDSS.

In terms of assembly, homodimer.

It carries out the reaction XMP + L-glutamine + ATP + H2O = GMP + L-glutamate + AMP + diphosphate + 2 H(+). The protein operates within purine metabolism; GMP biosynthesis; GMP from XMP (L-Gln route): step 1/1. In terms of biological role, catalyzes the synthesis of GMP from XMP. The polypeptide is GMP synthase [glutamine-hydrolyzing] (Zymomonas mobilis subsp. mobilis (strain ATCC 31821 / ZM4 / CP4)).